Consider the following 125-residue polypeptide: Holo-[acyl-carrier-protein] synthase (125 aa).

Mg(2+)-binding residues include Asp-8 and Glu-57.

Belongs to the P-Pant transferase superfamily. AcpS family. Requires Mg(2+) as cofactor.

It localises to the cytoplasm. It carries out the reaction apo-[ACP] + CoA = holo-[ACP] + adenosine 3',5'-bisphosphate + H(+). Functionally, transfers the 4'-phosphopantetheine moiety from coenzyme A to a Ser of acyl-carrier-protein. The sequence is that of Holo-[acyl-carrier-protein] synthase from Nitrosospira multiformis (strain ATCC 25196 / NCIMB 11849 / C 71).